Reading from the N-terminus, the 552-residue chain is CTP synthase (552 aa).

Residues 1–270 form an amidoligase domain region; that stretch reads MTKFVFVTGG…DGLICDKLRL (270 aa). S13 serves as a coordination point for CTP. S13 lines the UTP pocket. ATP contacts are provided by residues 14–19 and D71; that span reads SLGKGI. The Mg(2+) site is built by D71 and E144. Residues 151 to 153, 191 to 196, and K227 each bind CTP; these read DIE and KTKPTQ. UTP-binding positions include 191-196 and K227; that span reads KTKPTQ. Positions 295–548 constitute a Glutamine amidotransferase type-1 domain; the sequence is KIAMVGKYVE…VKAAIERQKA (254 aa). G357 provides a ligand contact to L-glutamine. C384 (nucleophile; for glutamine hydrolysis) is an active-site residue. L-glutamine is bound by residues 385 to 388, E408, and R474; that span reads LGMQ. Active-site residues include H521 and E523.

This sequence belongs to the CTP synthase family. As to quaternary structure, homotetramer.

It carries out the reaction UTP + L-glutamine + ATP + H2O = CTP + L-glutamate + ADP + phosphate + 2 H(+). The enzyme catalyses L-glutamine + H2O = L-glutamate + NH4(+). It catalyses the reaction UTP + NH4(+) + ATP = CTP + ADP + phosphate + 2 H(+). It functions in the pathway pyrimidine metabolism; CTP biosynthesis via de novo pathway; CTP from UDP: step 2/2. Its activity is regulated as follows. Allosterically activated by GTP, when glutamine is the substrate; GTP has no effect on the reaction when ammonia is the substrate. The allosteric effector GTP functions by stabilizing the protein conformation that binds the tetrahedral intermediate(s) formed during glutamine hydrolysis. Inhibited by the product CTP, via allosteric rather than competitive inhibition. Functionally, catalyzes the ATP-dependent amination of UTP to CTP with either L-glutamine or ammonia as the source of nitrogen. Regulates intracellular CTP levels through interactions with the four ribonucleotide triphosphates. This is CTP synthase from Delftia acidovorans (strain DSM 14801 / SPH-1).